A 147-amino-acid chain; its full sequence is uncharacterized protein (147 aa).

The disordered stretch occupies residues 23–48 (EEVSQPEPNTANDSSTEYKGKSKDDF). The span at 28–37 (PEPNTANDSS) shows a compositional bias: polar residues. Over residues 38–48 (TEYKGKSKDDF) the composition is skewed to basic and acidic residues. The chain crosses the membrane as a helical span at residues 85–105 (LMFCIIACSFICAIQFLFFII).

It localises to the membrane. This is an uncharacterized protein from Saccharomyces cerevisiae (strain ATCC 204508 / S288c) (Baker's yeast).